Reading from the N-terminus, the 393-residue chain is UDP-N-acetylglucosamine--N-acetylmuramyl-(pentapeptide) pyrophosphoryl-undecaprenol N-acetylglucosamine transferase (393 aa).

UDP-N-acetyl-alpha-D-glucosamine is bound by residues 14 to 16 (TAG), Asn-128, Arg-170, Ser-210, and Gln-321.

The protein belongs to the glycosyltransferase 28 family. MurG subfamily.

The protein resides in the cell membrane. The enzyme catalyses di-trans,octa-cis-undecaprenyl diphospho-N-acetyl-alpha-D-muramoyl-L-alanyl-D-glutamyl-meso-2,6-diaminopimeloyl-D-alanyl-D-alanine + UDP-N-acetyl-alpha-D-glucosamine = di-trans,octa-cis-undecaprenyl diphospho-[N-acetyl-alpha-D-glucosaminyl-(1-&gt;4)]-N-acetyl-alpha-D-muramoyl-L-alanyl-D-glutamyl-meso-2,6-diaminopimeloyl-D-alanyl-D-alanine + UDP + H(+). It functions in the pathway cell wall biogenesis; peptidoglycan biosynthesis. Functionally, cell wall formation. Catalyzes the transfer of a GlcNAc subunit on undecaprenyl-pyrophosphoryl-MurNAc-pentapeptide (lipid intermediate I) to form undecaprenyl-pyrophosphoryl-MurNAc-(pentapeptide)GlcNAc (lipid intermediate II). The chain is UDP-N-acetylglucosamine--N-acetylmuramyl-(pentapeptide) pyrophosphoryl-undecaprenol N-acetylglucosamine transferase from Bifidobacterium adolescentis (strain ATCC 15703 / DSM 20083 / NCTC 11814 / E194a).